Here is a 268-residue protein sequence, read N- to C-terminus: UPF0719 transmembrane protein aq_1349 (268 aa).

8 helical membrane passes run 5–24 (LIAL…LFFR), 37–59 (NLAL…YSVY), 69–91 (LYLI…IFLR), 104–126 (AGAG…ASFW), 130–152 (SFIL…LFIS), 173–195 (FSAS…GAIS), 210–232 (VLYF…FLLF), and 245–267 (NLSA…LAVM).

It belongs to the UPF0719 family.

The protein resides in the cell membrane. The chain is UPF0719 transmembrane protein aq_1349 from Aquifex aeolicus (strain VF5).